We begin with the raw amino-acid sequence, 598 residues long: Aspartate--tRNA(Asp/Asn) ligase (598 aa).

E177 contributes to the L-aspartate binding site. The segment at 201–204 is aspartate; sequence QLFK. R223 is an L-aspartate binding site. Residues 223–225 and Q232 each bind ATP; that span reads RDE. H456 contacts L-aspartate. E493 serves as a coordination point for ATP. R500 provides a ligand contact to L-aspartate. 545-548 is an ATP binding site; the sequence is GLDR.

This sequence belongs to the class-II aminoacyl-tRNA synthetase family. Type 1 subfamily. As to quaternary structure, homodimer.

The protein localises to the cytoplasm. The catalysed reaction is tRNA(Asx) + L-aspartate + ATP = L-aspartyl-tRNA(Asx) + AMP + diphosphate. In terms of biological role, aspartyl-tRNA synthetase with relaxed tRNA specificity since it is able to aspartylate not only its cognate tRNA(Asp) but also tRNA(Asn). Reaction proceeds in two steps: L-aspartate is first activated by ATP to form Asp-AMP and then transferred to the acceptor end of tRNA(Asp/Asn). The protein is Aspartate--tRNA(Asp/Asn) ligase of Prochlorococcus marinus (strain MIT 9301).